Here is a 382-residue protein sequence, read N- to C-terminus: LIM homeobox transcription factor 1-alpha (382 aa).

2 consecutive LIM zinc-binding domains span residues 33–92 and 92–154; these read SVCE…LFAV and VKCG…EREL. Disordered regions lie at residues 161 to 208 and 252 to 285; these read AASD…QQRR and KLARRQQQQQQDQQNTQRLSSAQTNGGGSAGMEG. A DNA-binding region (homeobox) is located at residues 195–254; sequence PKRPRTILTTQQRRAFKASFEVSSKPCRKVRETLAAETGLSVRVVQVWFQNQRAKMKKLA. Over residues 256–269 the composition is skewed to low complexity; the sequence is RQQQQQQDQQNTQR.

Isoform 1 is expressed in many tissues. Not found in heart, liver, spleen and testis. Relatively highly expressed in fetal brain. Isoform LMX1A-4AB is expressed in testis.

It is found in the nucleus. Functionally, acts as a transcriptional activator by binding to an A/T-rich sequence, the FLAT element, in the insulin gene promoter. Required for development of the roof plate and, in turn, for specification of dorsal cell fates in the CNS and developing vertebrae. This Homo sapiens (Human) protein is LIM homeobox transcription factor 1-alpha (LMX1A).